The sequence spans 253 residues: Imidazole glycerol phosphate synthase subunit HisF (253 aa).

Active-site residues include aspartate 11 and aspartate 130.

The protein belongs to the HisA/HisF family. In terms of assembly, heterodimer of HisH and HisF.

It localises to the cytoplasm. It catalyses the reaction 5-[(5-phospho-1-deoxy-D-ribulos-1-ylimino)methylamino]-1-(5-phospho-beta-D-ribosyl)imidazole-4-carboxamide + L-glutamine = D-erythro-1-(imidazol-4-yl)glycerol 3-phosphate + 5-amino-1-(5-phospho-beta-D-ribosyl)imidazole-4-carboxamide + L-glutamate + H(+). The protein operates within amino-acid biosynthesis; L-histidine biosynthesis; L-histidine from 5-phospho-alpha-D-ribose 1-diphosphate: step 5/9. IGPS catalyzes the conversion of PRFAR and glutamine to IGP, AICAR and glutamate. The HisF subunit catalyzes the cyclization activity that produces IGP and AICAR from PRFAR using the ammonia provided by the HisH subunit. The polypeptide is Imidazole glycerol phosphate synthase subunit HisF (Clostridium beijerinckii (strain ATCC 51743 / NCIMB 8052) (Clostridium acetobutylicum)).